Consider the following 668-residue polypeptide: Threonine--tRNA ligase (668 aa).

The TGS domain maps to 1–64 (MSQSVSLTFP…TDGKIEIITR (64 aa)). The segment at 245–553 (DHRKLGREMD…LIENFAGHMP (309 aa)) is catalytic. Zn(2+) is bound by residues C347, H398, and H530.

This sequence belongs to the class-II aminoacyl-tRNA synthetase family. Homodimer. It depends on Zn(2+) as a cofactor.

The protein resides in the cytoplasm. The catalysed reaction is tRNA(Thr) + L-threonine + ATP = L-threonyl-tRNA(Thr) + AMP + diphosphate + H(+). Catalyzes the attachment of threonine to tRNA(Thr) in a two-step reaction: L-threonine is first activated by ATP to form Thr-AMP and then transferred to the acceptor end of tRNA(Thr). Also edits incorrectly charged L-seryl-tRNA(Thr). The polypeptide is Threonine--tRNA ligase (Rhizobium etli (strain ATCC 51251 / DSM 11541 / JCM 21823 / NBRC 15573 / CFN 42)).